A 70-amino-acid polypeptide reads, in one-letter code: Melittin (70 aa).

An N-terminal signal peptide occupies residues 1–21 (MKFLVNVALVFMVVYISFIYA). Positions 22-43 (APEPEPAPEAEAEADAEADPEA) are cleaved as a propeptide — removed by a dipeptidylpeptidase. At G44 the chain carries N-formylglycine; partial. Position 69 is a glutamine amide (Q69).

This sequence belongs to the melittin family. Monomer (in solution and for integration into membranes), homotetramer (in solution and potentially as a toroidal pore in membranes), and potenially homomultimer (as a toroidal pore in membranes). Expressed by the venom gland.

Its subcellular location is the secreted. It is found in the target cell membrane. Functionally, main toxin of bee venom with strong hemolytic activity and antimicrobial activity. It has enhancing effects on bee venom phospholipase A2 activity. This amphipathic toxin binds to negatively charged membrane surface and forms pore by inserting into lipid bilayers inducing the leakage of ions and molecules and the enhancement of permeability that ultimately leads to cell lysis. It acts as a voltage-gated pore with higher selectivity for anions over cations. The ion conductance has been shown to be voltage-dependent. Self-association of melittin in membranes is promoted by high ionic strength, but not by the presence of negatively charged lipids. In vivo, intradermal injection into healthy human volunteers produce sharp pain sensation and an inflammatory response. It produces pain by activating primary nociceptor cells directly and indirectly due to its ability to activate plasma membrane phospholipase A2 and its pore-forming activity. This chain is Melittin (MELT), found in Polistes hebraeus (Paper wasp).